The sequence spans 242 residues: ATP-dependent dethiobiotin synthetase BioD (242 aa).

Residue 12–17 (SVGKTI) participates in ATP binding. Thr-16 contributes to the Mg(2+) binding site. Lys-37 is an active-site residue. ATP is bound at residue Asp-66. Mg(2+) is bound by residues Asp-66 and Glu-124. ATP is bound at residue 184-185 (NR).

The protein belongs to the dethiobiotin synthetase family. In terms of assembly, homodimer. Mg(2+) serves as cofactor.

It is found in the cytoplasm. It carries out the reaction (7R,8S)-7,8-diammoniononanoate + CO2 + ATP = (4R,5S)-dethiobiotin + ADP + phosphate + 3 H(+). It functions in the pathway cofactor biosynthesis; biotin biosynthesis; biotin from 7,8-diaminononanoate: step 1/2. Catalyzes a mechanistically unusual reaction, the ATP-dependent insertion of CO2 between the N7 and N8 nitrogen atoms of 7,8-diaminopelargonic acid (DAPA, also called 7,8-diammoniononanoate) to form a ureido ring. In Mannheimia succiniciproducens (strain KCTC 0769BP / MBEL55E), this protein is ATP-dependent dethiobiotin synthetase BioD.